The following is a 219-amino-acid chain: uncharacterized protein (219 aa).

A Phosphoserine modification is found at Ser23. Lys137 participates in a covalent cross-link: Glycyl lysine isopeptide (Lys-Gly) (interchain with G-Cter in SUMO).

It is found in the cytoplasm. This is an uncharacterized protein from Saccharomyces cerevisiae (strain ATCC 204508 / S288c) (Baker's yeast).